A 230-amino-acid chain; its full sequence is Acyl-protein thioesterase 1 (230 aa).

Catalysis depends on charge relay system residues Ser119, Asp174, and His208. Lys224 carries the post-translational modification N6-acetyllysine.

This sequence belongs to the AB hydrolase superfamily. AB hydrolase 2 family. As to quaternary structure, homodimer.

The protein resides in the cytoplasm. Its subcellular location is the cell membrane. It localises to the nucleus membrane. The protein localises to the endoplasmic reticulum. It carries out the reaction S-hexadecanoyl-L-cysteinyl-[protein] + H2O = L-cysteinyl-[protein] + hexadecanoate + H(+). It catalyses the reaction 1-hexadecanoyl-sn-glycero-3-phosphocholine + H2O = sn-glycerol 3-phosphocholine + hexadecanoate + H(+). The catalysed reaction is a 1-(9Z-octadecenoyl)-2-acyl-sn-glycero-3-phosphocholine + H2O = a 2-acyl-sn-glycero-3-phosphocholine + (9Z)-octadecenoate + H(+). Functionally, acts as an acyl-protein thioesterase. Hydrolyzes fatty acids from S-acylated cysteine residues in proteins such as trimeric G alpha proteins or HRAS. Acts as a palmitoyl thioesterase that catalyzes depalmitoylation of proteins, such as ADRB2, KCNMA1 and SQSTM1. Acts as a negative regulator of autophagy by mediating palmitoylation of SQSTM1, decreasing affinity between SQSTM1 and ATG8 proteins and recruitment of ubiquitinated cargo proteins to autophagosomes. Acts as a lysophospholipase and hydrolyzes lysophosphatidylcholine (lyso-PC). Also hydrolyzes lysophosphatidylethanolamine (lyso-PE), lysophosphatidylinositol (lyso-PI) and lysophosphatidylserine (lyso-PS). Has much higher thioesterase activity than lysophospholipase activity. Contributes to the production of lysophosphatidic acid (LPA) during blood coagulation by recognizing and cleaving plasma phospholipids to generate lysophospholipids which in turn act as substrates for ENPP2 to produce LPA. This is Acyl-protein thioesterase 1 (LYPLA1) from Pongo abelii (Sumatran orangutan).